A 231-amino-acid polypeptide reads, in one-letter code: Cytidylate kinase (231 aa).

12-20 (GPSGAGKGT) provides a ligand contact to ATP.

This sequence belongs to the cytidylate kinase family. Type 1 subfamily.

The protein resides in the cytoplasm. The enzyme catalyses CMP + ATP = CDP + ADP. It catalyses the reaction dCMP + ATP = dCDP + ADP. The chain is Cytidylate kinase from Shewanella amazonensis (strain ATCC BAA-1098 / SB2B).